A 324-amino-acid polypeptide reads, in one-letter code: tRNA dimethylallyltransferase (324 aa).

15–22 (GPTATGKS) provides a ligand contact to ATP. 17–22 (TATGKS) is a binding site for substrate. The interval 40–43 (DSAQ) is interaction with substrate tRNA.

It belongs to the IPP transferase family. Monomer. Requires Mg(2+) as cofactor.

The catalysed reaction is adenosine(37) in tRNA + dimethylallyl diphosphate = N(6)-dimethylallyladenosine(37) in tRNA + diphosphate. In terms of biological role, catalyzes the transfer of a dimethylallyl group onto the adenine at position 37 in tRNAs that read codons beginning with uridine, leading to the formation of N6-(dimethylallyl)adenosine (i(6)A). This is tRNA dimethylallyltransferase from Moorella thermoacetica (strain ATCC 39073 / JCM 9320).